The following is a 113-amino-acid chain: DNA-binding protein Mevan_1162 (113 aa).

A compositionally biased stretch (basic and acidic residues) spans 1–12 (MDPEEIKQKKLQ). Positions 1–22 (MDPEEIKQKKLQEMQAKAQDPE) are disordered.

Belongs to the PDCD5 family.

The chain is DNA-binding protein Mevan_1162 from Methanococcus vannielii (strain ATCC 35089 / DSM 1224 / JCM 13029 / OCM 148 / SB).